A 724-amino-acid chain; its full sequence is Probable zinc transporter MSC2 (724 aa).

Over 1 to 6 (MNLQEL) the chain is Cytoplasmic. The helical transmembrane segment at 7-27 (LAKVPLLLSYPTIILSSNLIV) threads the bilayer. The Lumenal segment spans residues 28-58 (PSHNDLISRAASTSAAEYADEKLIFFSTDHA). A helical transmembrane segment spans residues 59–79 (IRLIFLPTFVASSFNLFAHYF). Over 80 to 90 (NFINYSSRRKY) the chain is Cytoplasmic. A helical membrane pass occupies residues 91–111 (YVLFTAIYFLSILTAIFHPIQ). The Lumenal portion of the chain corresponds to 112 to 134 (STCITLLIIKLLTTADESSPKIA). Residues 135–155 (LNFKTILKTFVPFITLTLVIL) form a helical membrane-spanning segment. At 156-174 (RWDPSFDASSGDVNKISTS) the chain is on the cytoplasmic side. A helical membrane pass occupies residues 175 to 195 (LAAYALLILTLRYASPLILST). Residues 196–219 (LSSSIGVVSKDTSVAQHSISRNKR) are Lumenal-facing. Residues 220-240 (FPLILVLPIFSFVLLYLMTIV) form a helical membrane-spanning segment. Residues 241 to 244 (NKTY) lie on the Cytoplasmic side of the membrane. The helical transmembrane segment at 245–265 (NIQLLMVFVFFGCLSIFFLSL) threads the bilayer. Over 266–298 (KDLFTEDGNQKKGGQEDEYCRMFDIKYMISYLW) the chain is Lumenal. Residues 299 to 319 (LTRFTILLTGIMAIVVHFLSF) traverse the membrane as a helical segment. The Cytoplasmic portion of the chain corresponds to 320-386 (NEITSSIKTD…KQMALNKDTR (67 aa)). Residues 387–407 (SIFSFLLLNTAFMFVQLLYSF) form a helical membrane-spanning segment. Over 408–417 (RSKSLGLLSD) the chain is Lumenal. The helical transmembrane segment at 418–438 (SLHMALDCTSLLLGLIAGVLT) threads the bilayer. At 439-453 (KKPASDKFPFGLNYL) the chain is on the cytoplasmic side. Residues 454 to 474 (GTLAGFTNGVLLLGIVCGIFV) traverse the membrane as a helical segment. Over 475 to 491 (EAIERIFNPIHLHATNE) the chain is Lumenal. A helical transmembrane segment spans residues 492-512 (LLVVATLGLLVNLVGLFAFDH). Residues 513 to 528 (GAHDHGGTDNENMKGI) are Cytoplasmic-facing. The helical transmembrane segment at 529–549 (FLHILADTLGSVGVVISTLLI) threads the bilayer. Topologically, residues 550–563 (KLTHWPIFDPIASL) are lumenal. The chain crosses the membrane as a helical span at residues 564 to 584 (LIGSLILLSALPLLKSTSANI). The Cytoplasmic segment spans residues 585-724 (LLRLDDKKHN…NSLPLQPIAN (140 aa)). The interval 614 to 653 (TPRFWPTESGSSGHSHAHTHSHAENHSHEHHHDQKNGSQE) is disordered. Positions 634-648 (SHAENHSHEHHHDQK) are enriched in basic and acidic residues.

Belongs to the cation diffusion facilitator (CDF) transporter (TC 2.A.4) family. SLC30A subfamily.

The protein localises to the endoplasmic reticulum membrane. It is found in the nucleus membrane. In terms of biological role, probably act as a zinc ion transporter moving zinc from the nucleus/endoplasmic reticulum to the cytoplasm. Involved in zinc ion homeostasis and cellular distribution. This chain is Probable zinc transporter MSC2 (MSC2), found in Saccharomyces cerevisiae (strain ATCC 204508 / S288c) (Baker's yeast).